The following is a 431-amino-acid chain: MPVTIVLGGQWGDEGKGKITDALAATADIVVRPNGSTNAGHTVVTDEGVFKLHVIPSGILYPHCTCIIGAGVAVSPPDFLREIESLRERHPRLGQLYVSDRAHVIMPYHPLLDLYEERRRGAAGIGTTLRGNGPAFTDKIARRGIRIADLLPGSERSLRHKLETLLPEKNTLFIHLYGESPLDLDQLFEQARTWGEALAPYVIAAEVFVQDALDAGKSVIIEAAQGTMLDPDYGTYPYVTSSSPTAAGACQGAGVAPTQVDRIVGVFKAYTTRVGAGPFPTELTDETGQLIRERGREYGTTTGRPRRVGWFDAVAARYSARLNGMTEAALTKLDMLDPLPEVRICVGYRIDNQEVSAPPAQVERYAAVEPVYEVLPGWQCDTSQVTSFDDLPPEAQRYVARIEELIGVPITMIGVGPARRQILWRPAGALT.

Residues 12–18 (GDEGKGK) and 40–42 (GHT) contribute to the GTP site. D13 functions as the Proton acceptor in the catalytic mechanism. D13 and G40 together coordinate Mg(2+). IMP contacts are provided by residues 13 to 16 (DEGK), 38 to 41 (NAGH), T128, R142, Q225, T240, and R304. H41 functions as the Proton donor in the catalytic mechanism. 300–306 (TTTGRPR) serves as a coordination point for substrate. GTP is bound by residues R306, 332 to 334 (KLD), and 414 to 416 (GVG).

This sequence belongs to the adenylosuccinate synthetase family. As to quaternary structure, homodimer. The cofactor is Mg(2+).

Its subcellular location is the cytoplasm. It carries out the reaction IMP + L-aspartate + GTP = N(6)-(1,2-dicarboxyethyl)-AMP + GDP + phosphate + 2 H(+). The protein operates within purine metabolism; AMP biosynthesis via de novo pathway; AMP from IMP: step 1/2. Its function is as follows. Plays an important role in the de novo pathway of purine nucleotide biosynthesis. Catalyzes the first committed step in the biosynthesis of AMP from IMP. This chain is Adenylosuccinate synthetase, found in Thermomicrobium roseum (strain ATCC 27502 / DSM 5159 / P-2).